A 167-amino-acid polypeptide reads, in one-letter code: Large ribosomal subunit protein bL9 (167 aa).

It belongs to the bacterial ribosomal protein bL9 family.

Its function is as follows. Binds to the 23S rRNA. The sequence is that of Large ribosomal subunit protein bL9 from Chlamydia muridarum (strain MoPn / Nigg).